The following is a 217-amino-acid chain: Small ribosomal subunit protein uS3 (217 aa).

The KH type-2 domain maps to 40-110 (IRDLINKGFN…EVYINIHEVR (71 aa)).

The protein belongs to the universal ribosomal protein uS3 family. As to quaternary structure, part of the 30S ribosomal subunit. Forms a tight complex with proteins S10 and S14.

Functionally, binds the lower part of the 30S subunit head. Binds mRNA in the 70S ribosome, positioning it for translation. This chain is Small ribosomal subunit protein uS3, found in Rickettsia africae (strain ESF-5).